Reading from the N-terminus, the 525-residue chain is Heat shock factor protein 1 (525 aa).

The residue at position 1 (methionine 1) is an N-acetylmethionine. The DNA-binding domain stretch occupies residues 15–120; that stretch reads VPAFLTKLWT…LLENIKRKVT (106 aa). N6-acetyllysine is present on lysine 80. Residue lysine 91 is modified to N6-acetyllysine; alternate. A Glycyl lysine isopeptide (Lys-Gly) (interchain with G-Cter in SUMO2); alternate cross-link involves residue lysine 91. Lysine 118 is subject to N6-acetyllysine. Position 121 is a phosphoserine; by MAPKAPK2 (serine 121). Residues lysine 126 and lysine 131 each participate in a glycyl lysine isopeptide (Lys-Gly) (interchain with G-Cter in SUMO2) cross-link. The tract at residues 130–203 is hydrophobic repeat HR-A/B; the sequence is IKIRQDSVTR…ISLVQSNRIL (74 aa). The residue at position 142 (threonine 142) is a Phosphothreonine; by CK2. Residues lysine 150 and lysine 188 each carry the N6-acetyllysine modification. The interval 203–224 is d domain; it reads LGVKRKIPLMLSDSNSAHSVPK. Lysine 208 bears the N6-acetyllysine; alternate mark. Lysine 208 participates in a covalent cross-link: Glycyl lysine isopeptide (Lys-Gly) (interchain with G-Cter in SUMO2); alternate. The residue at position 216 (serine 216) is a Phosphoserine; by PLK1. Residues 221–310 form a regulatory domain region; sequence SVPKYGRQYS…PPSPPHSPRV (90 aa). Residue lysine 224 forms a Glycyl lysine isopeptide (Lys-Gly) (interchain with G-Cter in SUMO2) linkage. Residue serine 230 is modified to Phosphoserine; by CAMK2A. Disordered regions lie at residues 272–327 and 340–365; these read APTS…PLSP and PTPAASNTAPMDTTGAQAPALPTPST. 2 positions are modified to phosphoserine: serine 275 and serine 292. N6-acetyllysine; alternate is present on lysine 298. Residue lysine 298 forms a Glycyl lysine isopeptide (Lys-Gly) (interchain with G-Cter in SUMO2); alternate linkage. Residue lysine 298 forms a Glycyl lysine isopeptide (Lys-Gly) (interchain with G-Cter in SUMO); alternate linkage. 4 positions are modified to phosphoserine: serine 303, serine 307, serine 314, and serine 319. A Phosphoserine; by PKA modification is found at serine 320. Phosphothreonine is present on threonine 323. Serine 326 carries the phosphoserine; by MAPK12 modification. A compositionally biased stretch (polar residues) spans 343–355; it reads AASNTAPMDTTGA. Serine 345 bears the Phosphoserine mark. The segment at 367–525 is transactivation domain; it reads EKCLSVACLD…PHKAKDPTVS (159 aa). The hydrophobic repeat HR-C stretch occupies residues 380–405; it reads LSDHLDAMDSNLDNLQTMLTSHGFSV. The 9aaTAD motif lies at 408 to 416; it reads SALLDLFSP. Residue serine 415 is modified to Phosphoserine; by PLK1. Serine 440 is modified (phosphoserine). Disordered regions lie at residues 441-460 and 495-525; these read PQEPPRPIEAENSNPDSGKQ and YFSEGDDYTDDPTISLLTGTEPHKAKDPTVS. Over residues 515–525 the composition is skewed to basic and acidic residues; it reads EPHKAKDPTVS. Lysine 520 carries the N6-acetyllysine modification.

Belongs to the HSF family. As to quaternary structure, monomer; cytoplasmic latent and transcriptionally inactive monomeric form in unstressed cells. Homotrimer; in response to stress, such as heat shock, homotrimerizes and translocates into the nucleus, binds to heat shock element (HSE) sequences in promoter of heat shock protein (HSP) genes and acquires transcriptional ability. Interacts (via monomeric form) with FKBP4; this interaction occurs in unstressed cells. Associates (via monomeric form) with HSP90 proteins in a multichaperone complex in unnstressed cell; this association maintains HSF1 in a non-DNA-binding and transcriptional inactive form by preventing HSF1 homotrimerization. Homotrimeric transactivation activity is modulated by protein-protein interactions and post-translational modifications. Interacts with HSP90AA1; this interaction is decreased in a IER5-dependent manner, promoting HSF1 accumulation in the nucleus, homotrimerization and DNA-binding activities. Part (via regulatory domain in the homotrimeric form) of a large heat shock-induced HSP90-dependent multichaperone complex at least composed of FKBP4, FKBP5, HSP90 proteins, PPID, PPP5C and PTGES3; this association maintains the HSF1 homotrimeric DNA-bound form in a transcriptionally inactive form. Interacts with BAG3 (via BAG domain); this interaction occurs in normal and heat-shocked cells promoting nuclear shuttling of HSF1 in a BAG3-dependent manner. Interacts (via homotrimeric and hyperphosphorylated form) with FKBP4; this interaction occurs upon heat shock in a HSP90-dependent multichaperone complex. Interacts (via homotrimeric form preferentially) with EEF1A proteins. In heat shocked cells, stress-denatured proteins compete with HSF1 homotrimeric DNA-bound form for association of the HSP90-dependent multichaperone complex, and hence alleviating repression of HSF1-mediated transcriptional activity. Interacts (via homotrimeric form preferentially) with DAXX; this interaction relieves homotrimeric HSF1 from repression of its transcriptional activity by HSP90-dependent multichaperone complex upon heat shock. Interacts (via D domain and preferentially with hyperphosphorylated form) with JNK1; this interaction occurs under both normal growth conditions and immediately upon heat shock. Interacts (via D domain and preferentially with hyperphosphorylated form) with MAPK3; this interaction occurs upon heat shock. Interacts with IER5 (via central region); this interaction promotes PPP2CA-induced dephosphorylation on Ser-121, Ser-307, Ser-314 and Thr-323 and HSF1 transactivation activity. Found in a ribonucleoprotein complex composed of the HSF1 homotrimeric form, translation elongation factor eEF1A proteins and non-coding RNA heat shock RNA-1 (HSR1); this complex occurs upon heat shock and stimulates HSF1 DNA-binding activity. Interacts (via transactivation domain) with HSPA1A/HSP70 and DNAJB1; these interactions result in the inhibition of heat shock- and HSF1-induced transcriptional activity during the attenuation and recovery phase from heat shock. Interacts (via Ser-303 and Ser-307 phosphorylated form) with YWHAE; this interaction promotes HSF1 sequestration in the cytoplasm in an ERK-dependent manner. Found in a complex with IER5 and PPP2CA. Interacts with TPR; this interaction increases upon heat shock and stimulates export of HSP70 mRNA. Interacts with SYMPK (via N-terminus) and CSTF2; these interactions occur upon heat shock. Interacts (via transactivation domain) with HSPA8. Interacts with EEF1D; this interaction occurs at heat shock promoter element (HSE) sequences. Interacts with MAPKAPK2. Interacts with PRKACA/PKA. Interacts (via transactivation domain) with GTF2A2. Interacts (via transactivation domain) with GTF2B. Interacts (via transactivation domain) with TBP. Interacts with CDK9, CCNT1 and EP300. Interacts (via N-terminus) with XRCC5 (via N-terminus) and XRCC6 (via N-terminus); these interactions are direct and prevent XRCC5/XRCC6 heterodimeric binding and non-homologous end joining (NHEJ) repair activities induced by ionizing radiation (IR). Interacts with PLK1; this interaction occurs during the early mitotic period, increases upon heat shock but does not modulate neither HSF1 homotrimerization and DNA-binding activities. Interacts (via Ser-216 phosphorylated form) with CDC20; this interaction occurs in mitosis in a MAD2L1-dependent manner and prevents PLK1-stimulated degradation of HSF1 by blocking the recruitment of the SCF(BTRC) ubiquitin ligase complex. Interacts with MAD2L1; this interaction occurs in mitosis. Interacts with BTRC; this interaction occurs during mitosis, induces its ubiquitin-dependent degradation following stimulus-dependent phosphorylation at Ser-216, a process inhibited by CDC20. Interacts with HSP90AA1 and HSP90AB1. Forms a complex with TTC5/STRAP and p300/EP300; these interactions augment chromatin-bound HSF1 and p300/EP300 histone acetyltransferase activity. Phosphorylated. Phosphorylated in unstressed cells; this phosphorylation is constitutive and implicated in the repression of HSF1 transcriptional activity. Phosphorylated on Ser-121 by MAPKAPK2; this phosphorylation promotes interaction with HSP90 proteins and inhibits HSF1 homotrimerization, DNA-binding and transactivation activities. Phosphorylation on Ser-303 by GSK3B/GSK3-beat and on Ser-307 by MAPK3 within the regulatory domain is involved in the repression of HSF1 transcriptional activity and occurs in a RAF1-dependent manner. Phosphorylation on Ser-303 and Ser-307 increases HSF1 nuclear export in a YWHAE- and XPO1/CRM1-dependent manner. Phosphorylation on Ser-307 is a prerequisite for phosphorylation on Ser-303. According to, Ser-303 is not phosphorylated in unstressed cells. Phosphorylated on Ser-415 by PLK1; phosphorylation promotes nuclear translocation upon heat shock. Hyperphosphorylated upon heat shock and during the attenuation and recovery phase period of the heat shock response. Phosphorylated on Thr-142; this phosphorylation increases HSF1 transactivation activity upon heat shock. Phosphorylation on Ser-230 by CAMK2A; this phosphorylation enhances HSF1 transactivation activity upon heat shock. Phosphorylation on Ser-326 by MAPK12; this phosphorylation enhances HSF1 nuclear translocation, homotrimerization and transactivation activities upon heat shock. Phosphorylated on Ser-320 by PRKACA/PKA; this phosphorylation promotes nuclear localization and transcriptional activity upon heat shock. Phosphorylated by MAPK8; this phosphorylation occurs upon heat shock, induces HSF1 translocation into nuclear stress bodies and negatively regulates transactivation activity. Neither basal nor stress-inducible phosphorylation on Ser-230, Ser-292, Ser-303, Ser-307, Ser-314, Ser-319, Ser-320, Thr-323, Ser-326, Ser-338, Ser-345, Ser-364 and Thr-365 within the regulatory domain is involved in the regulation of HSF1 subcellular localization or DNA-binding activity; however, it negatively regulates HSF1 transactivation activity. Phosphorylated on Ser-216 by PLK1 in the early mitotic period; this phosphorylation regulates HSF1 localization to the spindle pole, the recruitment of the SCF(BTRC) ubiquitin ligase complex inducing HSF1 degradation, and hence mitotic progression. Dephosphorylated on Ser-121, Ser-307, Ser-314 and Thr-323 by phosphatase PPP2CA in an IER5-dependent manner, leading to HSF1-mediated transactivation activity. In terms of processing, sumoylated with SUMO1 and SUMO2 upon heat shock in a ERK2-dependent manner. Sumoylated by SUMO1 on Lys-298; sumoylation occurs upon heat shock and promotes its localization to nuclear stress bodies and DNA-binding activity. Phosphorylation on Ser-303 and Ser-307 is probably a prerequisite for sumoylation. Post-translationally, acetylated on Lys-118; this acetylation is decreased in a IER5-dependent manner. Acetylated on Lys-118, Lys-208 and Lys-298; these acetylations occur in a EP300-dependent manner. Acetylated on Lys-80; this acetylation inhibits DNA-binding activity upon heat shock. Deacetylated on Lys-80 by SIRT1; this deacetylation increases DNA-binding activity. Ubiquitinated by SCF(BTRC) and degraded following stimulus-dependent phosphorylation at Ser-216 by PLK1 in mitosis. Polyubiquitinated. Undergoes proteasomal degradation upon heat shock and during the attenuation and recovery phase period of the heat shock response.

Its subcellular location is the nucleus. It is found in the cytoplasm. The protein localises to the nucleoplasm. The protein resides in the perinuclear region. It localises to the cytoskeleton. Its subcellular location is the spindle pole. It is found in the microtubule organizing center. The protein localises to the centrosome. The protein resides in the chromosome. It localises to the centromere. Its subcellular location is the kinetochore. Functionally, functions as a stress-inducible and DNA-binding transcription factor that plays a central role in the transcriptional activation of the heat shock response (HSR), leading to the expression of a large class of molecular chaperones, heat shock proteins (HSPs), that protect cells from cellular insult damage. In unstressed cells, is present in a HSP90-containing multichaperone complex that maintains it in a non-DNA-binding inactivated monomeric form. Upon exposure to heat and other stress stimuli, undergoes homotrimerization and activates HSP gene transcription through binding to site-specific heat shock elements (HSEs) present in the promoter regions of HSP genes. Upon heat shock stress, forms a chromatin-associated complex with TTC5/STRAP and p300/EP300 to stimulate HSR transcription, therefore increasing cell survival. Activation is reversible, and during the attenuation and recovery phase period of the HSR, returns to its unactivated form. Binds to inverted 5'-NGAAN-3' pentamer DNA sequences. Binds to chromatin at heat shock gene promoters. Activates transcription of transcription factor FOXR1 which in turn activates transcription of the heat shock chaperones HSPA1A and HSPA6 and the antioxidant NADPH-dependent reductase DHRS2. Binds the promoter region upstream of exon 1 of Mpv17l to activate expression of the M-LPS isoform which is involved in metabolism of reactive oxygen species. Also serves several other functions independently of its transcriptional activity. Involved in the repression of Ras-induced transcriptional activation of the c-fos gene in heat-stressed cells. Positively regulates pre-mRNA 3'-end processing and polyadenylation of HSP70 mRNA upon heat-stressed cells in a symplekin (SYMPK)-dependent manner. Plays a role in nuclear export of stress-induced HSP70 mRNA. Plays a role in the regulation of mitotic progression. Also plays a role as a negative regulator of non-homologous end joining (NHEJ) repair activity in a DNA damage-dependent manner. Involved in stress-induced cancer cell proliferation in a IER5-dependent manner. The polypeptide is Heat shock factor protein 1 (Mus musculus (Mouse)).